Here is a 72-residue protein sequence, read N- to C-terminus: MSRRKVCRFTIEGVKEIDYKDVNKLKAYINETGKIVPSRVTGTSAKYQRQLATAIKRARFLALLPYCDRHFN.

Belongs to the bacterial ribosomal protein bS18 family. As to quaternary structure, part of the 30S ribosomal subunit. Forms a tight heterodimer with protein bS6.

Its function is as follows. Binds as a heterodimer with protein bS6 to the central domain of the 16S rRNA, where it helps stabilize the platform of the 30S subunit. The polypeptide is Small ribosomal subunit protein bS18 (Francisella tularensis subsp. holarctica (strain FTNF002-00 / FTA)).